Here is a 992-residue protein sequence, read N- to C-terminus: RNA-binding protein 12 (992 aa).

In terms of domain architecture, RRM 1 spans 304 to 379; that stretch reads LYVSVHGMPF…RYVEVSPATE (76 aa). Residues S352 and S375 each carry the phosphoserine modification. Residues 393-424 are disordered; that stretch reads QSMGPSGQAHPPPQTLPRSKSPSGQKRSRSRS. Residues 408–417 show a composition bias toward polar residues; sequence LPRSKSPSGQ. Residues S420, S422, and S424 each carry the phosphoserine modification. The RRM 2 domain occupies 430 to 507; that stretch reads FCVYLKGLPF…RFIQVHPITK (78 aa). A Phosphoserine modification is found at S525. The interval 849–913 is disordered; that stretch reads FGGIPQNFGN…PGFGASSGKP (65 aa). The span at 876–887 shows a compositional bias: low complexity; the sequence is LGSVPGHLSGPP. One can recognise an RRM 3 domain in the interval 916–992; sequence TIIKVQNMPF…GSRKVKLVLG (77 aa).

Its subcellular location is the nucleus. The chain is RNA-binding protein 12 (Rbm12) from Mus musculus (Mouse).